Reading from the N-terminus, the 798-residue chain is Neuroligin-1 (798 aa).

An N-terminal signal peptide occupies residues 1–17 (MERIYLLLLLFLPRIRS). The Extracellular portion of the chain corresponds to 18–685 (YDVRSVTTSW…AAGSFTGKAL (668 aa)). An intrachain disulfide couples Cys-86 to Cys-125. N-linked (GlcNAc...) asparagine glycans are attached at residues Asn-164, Asn-292, and Asn-315. Cys-288 and Cys-307 form a disulfide bridge. The interval 636 to 676 (ANLPFPPPPMPPSPPPELTTKPKPSESPTTLQTTTESEKAA) is disordered. The span at 639–652 (PFPPPPMPPSPPPE) shows a compositional bias: pro residues. Positions 653–665 (LTTKPKPSESPTT) are enriched in low complexity. A helical transmembrane segment spans residues 686–706 (GGVIFIGCGFLIMNVCLLIAV). Residues 707–798 (RREWGKKRRN…QAPTLEEIQV (92 aa)) lie on the Cytoplasmic side of the membrane. The segment at 731–765 (HGGGAEQYNSLNSPEPLLSASHKNSTSMRPAGISP) is disordered.

Belongs to the type-B carboxylesterase/lipase family. In terms of assembly, interacts (via extracellular domain) with isoform b of madd-4; the interaction is required for the localization to postsynaptic domains. Interacts with unc-49.

It localises to the cell membrane. The protein resides in the synapse. Functionally, probable neuronal cell surface protein thought to be involved in cell-cell-interactions by forming intercellular junctions through binding to beta-neurexins. Plays a role in the clustering of the GABA(A) receptor unc-49 at postsynaptic sites in neuromuscular junctions (NMJs) via the interaction with madd-4 and neurexin nrx-1 and is thereby required for normal GABAergic synaptic transmission. The protein is Neuroligin-1 (nlg-1) of Caenorhabditis elegans.